A 231-amino-acid polypeptide reads, in one-letter code: Phycobilisome rod-core linker polypeptide cpcG (231 aa).

The region spanning 11–191 (STQNQRVDGY…PRYGADFKEK (181 aa)) is the PBS-linker domain.

The protein belongs to the phycobilisome linker protein family. As to quaternary structure, the phycobilisome is a hemidiscoidal structure that is composed of two distinct substructures: a core complex and a number of rods radiating from the core.

The protein resides in the plastid. The protein localises to the chloroplast. Its subcellular location is the chloroplast thylakoid membrane. Its function is as follows. Rod-core linker protein required for attachment of phycocyanin to allophycocyanin in cores of phycobilisomes. In terms of biological role, linker polypeptides determine the state of aggregation and the location of the disk-shaped phycobiliprotein units within the phycobilisome and modulate their spectroscopic properties in order to mediate a directed and optimal energy transfer. This chain is Phycobilisome rod-core linker polypeptide cpcG (cpcG), found in Porphyra purpurea (Red seaweed).